A 145-amino-acid polypeptide reads, in one-letter code: 3-hydroxyacyl-[acyl-carrier-protein] dehydratase FabZ (145 aa).

His47 is a catalytic residue.

This sequence belongs to the thioester dehydratase family. FabZ subfamily.

The protein localises to the cytoplasm. The catalysed reaction is a (3R)-hydroxyacyl-[ACP] = a (2E)-enoyl-[ACP] + H2O. Involved in unsaturated fatty acids biosynthesis. Catalyzes the dehydration of short chain beta-hydroxyacyl-ACPs and long chain saturated and unsaturated beta-hydroxyacyl-ACPs. In Thiobacillus denitrificans (strain ATCC 25259 / T1), this protein is 3-hydroxyacyl-[acyl-carrier-protein] dehydratase FabZ.